Consider the following 121-residue polypeptide: Large ribosomal subunit protein uL22 (121 aa).

The protein belongs to the universal ribosomal protein uL22 family. As to quaternary structure, part of the 50S ribosomal subunit.

Functionally, this protein binds specifically to 23S rRNA; its binding is stimulated by other ribosomal proteins, e.g. L4, L17, and L20. It is important during the early stages of 50S assembly. It makes multiple contacts with different domains of the 23S rRNA in the assembled 50S subunit and ribosome. The globular domain of the protein is located near the polypeptide exit tunnel on the outside of the subunit, while an extended beta-hairpin is found that lines the wall of the exit tunnel in the center of the 70S ribosome. This Synechococcus sp. (strain CC9902) protein is Large ribosomal subunit protein uL22.